Here is a 433-residue protein sequence, read N- to C-terminus: Phosphoribosylamine--glycine ligase (433 aa).

The region spanning Arg-110 to Lys-317 is the ATP-grasp domain. Ile-137–Thr-194 is a binding site for ATP. Mg(2+)-binding residues include Gln-275, Glu-287, and Asn-289. Mn(2+) is bound by residues Gln-275, Glu-287, and Asn-289.

It belongs to the GARS family. Mg(2+) serves as cofactor. The cofactor is Mn(2+).

The catalysed reaction is 5-phospho-beta-D-ribosylamine + glycine + ATP = N(1)-(5-phospho-beta-D-ribosyl)glycinamide + ADP + phosphate + H(+). It participates in purine metabolism; IMP biosynthesis via de novo pathway; N(1)-(5-phospho-D-ribosyl)glycinamide from 5-phospho-alpha-D-ribose 1-diphosphate: step 2/2. The chain is Phosphoribosylamine--glycine ligase from Methanosarcina barkeri (strain Fusaro / DSM 804).